The following is a 484-amino-acid chain: Glutamate--tRNA ligase (484 aa).

The short motif at 10–20 (PSPTGYLHVGG) is the 'HIGH' region element. The 'KMSKS' region motif lies at 252 to 256 (KLSKR). An ATP-binding site is contributed by Lys-255.

This sequence belongs to the class-I aminoacyl-tRNA synthetase family. Glutamate--tRNA ligase type 1 subfamily. In terms of assembly, monomer.

It is found in the cytoplasm. It catalyses the reaction tRNA(Glu) + L-glutamate + ATP = L-glutamyl-tRNA(Glu) + AMP + diphosphate. Functionally, catalyzes the attachment of glutamate to tRNA(Glu) in a two-step reaction: glutamate is first activated by ATP to form Glu-AMP and then transferred to the acceptor end of tRNA(Glu). This chain is Glutamate--tRNA ligase, found in Mycoplasma genitalium (strain ATCC 33530 / DSM 19775 / NCTC 10195 / G37) (Mycoplasmoides genitalium).